The chain runs to 364 residues: Pre-small/secreted glycoprotein (364 aa).

The first 32 residues, 1–32 (MGVTGILQLPRDRFKRTSFFLWVIILFQRTFS), serve as a signal peptide directing secretion. A glycan (N-linked (GlcNAc...) asparagine; by host) is linked at N40. 2 disulfides stabilise this stretch: C108–C135 and C121–C147. Residues N204, N228, N238, N257, and N268 are each glycosylated (N-linked (GlcNAc...) asparagine; by host).

Belongs to the filoviruses glycoprotein family. Homodimer; disulfide-linked. The homodimers are linked by two disulfide bonds in a parallel orientation. As to quaternary structure, monomer. This precursor is processed into mature sGP and delta-peptide by host furin or furin-like proteases. The cleavage site corresponds to the furin optimal cleavage sequence [KR]-X-[KR]-R. In terms of processing, N-glycosylated. Post-translationally, O-glycosylated.

It is found in the secreted. Seems to possess an anti-inflammatory activity as it can reverse the barrier-decreasing effects of TNF alpha. Might therefore contribute to the lack of inflammatory reaction seen during infection in spite the of extensive necrosis and massive virus production. Does not seem to be involved in activation of primary macrophages. Does not seem to interact specifically with neutrophils. Its function is as follows. Viroporin that permeabilizes mammalian cell plasma membranes. It acts by altering permeation of ionic compounds and small molecules. This activity may lead to viral enterotoxic activity. This Zaire ebolavirus (strain Gabon-94) (ZEBOV) protein is Pre-small/secreted glycoprotein (GP).